Reading from the N-terminus, the 60-residue chain is UPF0337 protein SAV1625 (60 aa).

The interval 18–41 (VGNVTDNKELEKEGQQDKATGKAK) is disordered. Residues 23–41 (DNKELEKEGQQDKATGKAK) are compositionally biased toward basic and acidic residues.

The protein belongs to the UPF0337 (CsbD) family.

This Staphylococcus aureus (strain Mu50 / ATCC 700699) protein is UPF0337 protein SAV1625.